Consider the following 166-residue polypeptide: MPRSQKNDNFIDKTFTVVADILLKVLPTSIDEKRAFTYYRNGMSAQSEGEYAEALQNYYQALRYEIDAYDRSYMLYNIGLIHSSNGQQSKALEYYYQALDRNPRLSQALNNIATIYHYRGEQALINNQDEISKIFFDKAADYWKEAIRLSPTSYTKAKNWLSVRNK.

TPR repeat units lie at residues 35–68 (AFTYYRNGMSAQSEGEYAEALQNYYQALRYEIDA), 72–105 (SYMLYNIGLIHSSNGQQSKALEYYYQALDRNPRL), and 120–153 (GEQALINNQDEISKIFFDKAADYWKEAIRLSPTS).

Belongs to the Ycf3 family.

It is found in the plastid. The protein resides in the chloroplast thylakoid membrane. In terms of biological role, essential for the assembly of the photosystem I (PSI) complex. May act as a chaperone-like factor to guide the assembly of the PSI subunits. The polypeptide is Photosystem I assembly protein Ycf3 (Bigelowiella natans (Pedinomonas minutissima)).